The chain runs to 270 residues: 4-hydroxy-tetrahydrodipicolinate reductase (270 aa).

NAD(+) contacts are provided by residues Gly-9–Met-14 and Glu-35. Arg-36 contacts NADP(+). NAD(+)-binding positions include Gly-99–Thr-101 and Ala-123–Phe-126. Catalysis depends on His-156, which acts as the Proton donor/acceptor. Residue His-157 coordinates (S)-2,3,4,5-tetrahydrodipicolinate. Lys-160 (proton donor) is an active-site residue. Residue Gly-166 to Thr-167 coordinates (S)-2,3,4,5-tetrahydrodipicolinate.

It belongs to the DapB family.

The protein localises to the cytoplasm. It carries out the reaction (S)-2,3,4,5-tetrahydrodipicolinate + NAD(+) + H2O = (2S,4S)-4-hydroxy-2,3,4,5-tetrahydrodipicolinate + NADH + H(+). The catalysed reaction is (S)-2,3,4,5-tetrahydrodipicolinate + NADP(+) + H2O = (2S,4S)-4-hydroxy-2,3,4,5-tetrahydrodipicolinate + NADPH + H(+). It participates in amino-acid biosynthesis; L-lysine biosynthesis via DAP pathway; (S)-tetrahydrodipicolinate from L-aspartate: step 4/4. Functionally, catalyzes the conversion of 4-hydroxy-tetrahydrodipicolinate (HTPA) to tetrahydrodipicolinate. This chain is 4-hydroxy-tetrahydrodipicolinate reductase, found in Haemophilus influenzae (strain 86-028NP).